Consider the following 309-residue polypeptide: Taste receptor type 2 member 46 (309 aa).

Position 1 (Met1) is a topological domain, extracellular. A helical membrane pass occupies residues 2-22 (ITFLPIIFSILIVVTFVIGNF). The Cytoplasmic segment spans residues 23 to 46 (ANGFIALANSIEWFKRQKISFADQ). A helical membrane pass occupies residues 47-67 (ILTALAVSRVGLLWVLLLNWY). Over 68–86 (ATELNPAFYSIEVRITAYN) the chain is Extracellular. Residues 87 to 107 (VWAVISHFSNWLATSLSIFYL) traverse the membrane as a helical segment. At 108–126 (LKIANFSNLIFLRLKRRVK) the chain is on the cytoplasmic side. The chain crosses the membrane as a helical span at residues 127–147 (SVVLVILLGPLLFLVCHLFVI). Topologically, residues 148–178 (NMNQIIWTKEYEGNMTWKIKLRSAMYLSDTT) are extracellular. Residue Asn161 is glycosylated (N-linked (GlcNAc...) asparagine). Residues 179–199 (VTILANLVPFTLTLISFLLLI) form a helical membrane-spanning segment. At 200–229 (CSLCKHLKKMQLHGKGSQDPSMKVHIKALQ) the chain is on the cytoplasmic side. Residues 230–250 (TVTSFLLLCAIYFLSVIMSVW) form a helical membrane-spanning segment. The Extracellular segment spans residues 251–259 (SFESLENKP). Residues 260–280 (VFMFCEAITFSYPSTHPFILI) traverse the membrane as a helical segment. Topologically, residues 281 to 309 (WGNKKLKQTFLSVLWHVRYWVKGEKPSSS) are cytoplasmic.

The protein belongs to the G-protein coupled receptor T2R family.

The protein localises to the membrane. Its subcellular location is the cell projection. The protein resides in the cilium membrane. Receptor that may play a role in the perception of bitterness and is gustducin-linked. May play a role in sensing the chemical composition of the gastrointestinal content. The activity of this receptor may stimulate alpha gustducin, mediate PLC-beta-2 activation and lead to the gating of TRPM5. In airway epithelial cells, binding of bitter compounds increases the intracellular calcium ion concentration and stimulates ciliary beat frequency. This is Taste receptor type 2 member 46 (TAS2R46) from Gorilla gorilla gorilla (Western lowland gorilla).